The primary structure comprises 31 residues: Mu-conotoxin SmIIIA (31 aa).

Residues 1–6 constitute a propeptide that is removed on maturation; the sequence is PLFDKR. Glutamine 7 carries the pyrrolidone carboxylic acid modification. 3 cysteine pairs are disulfide-bonded: cysteine 9/cysteine 21, cysteine 10/cysteine 27, and cysteine 16/cysteine 28. The residue at position 28 (cysteine 28) is a Cysteine amide.

It belongs to the conotoxin M superfamily. In terms of processing, smIIIA' is a putative isoform where the N-terminal AA is missing. Expressed by the venom duct.

The protein localises to the secreted. Mu-conotoxins block voltage-gated sodium channels (Nav). This toxin blocks rNav1.5/SCN5A (IC(50) is 1.3 uM), rNav1.6/SCN8A (IC(50) is 160 nM), rNav1.7/SCN9A (IC(50) is 1.3 uM), rNav1.1/SCN1A (K(d) is 3.8 nM), rNav1.2/SCN2A (K(d) is 1.3 nM), rNav1.4/SCN4A (K(d) is 0.22 nM), rNav1.6/SCN8A (K(d) is 69 nM), and rNav1.7/SCN9A (K(d) is 260 nM). This toxin is very potent but weakly discriminating among sodium channels. The block of these channels is modified when beta-subunits are coexpressed with alpha subunits. Hence, blocks of channels containing beta-1 and beta-3 subunits are more potent (compared to channels without beta subunits), whereas blocks of channels containing beta-2 and beta-4 subunits are less potent (compared to channels without beta subunits). The polypeptide is Mu-conotoxin SmIIIA (Conus stercusmuscarum (Fly-specked cone)).